A 505-amino-acid chain; its full sequence is Tyrosine-protein kinase Blk (505 aa).

The interval 1–37 (MGLVSSKKPDKEKPIKEKDKGQWSPLKVSAQDKDAPP) is disordered. Gly2 is lipidated: N-myristoyl glycine. Over residues 7–21 (KKPDKEKPIKEKDKG) the composition is skewed to basic and acidic residues. Residues 58 to 118 (EDKHFVVALY…PSNFVARVES (61 aa)) enclose the SH3 domain. The region spanning 124-220 (WFFRSQGRKE…GLCQRLTLPC (97 aa)) is the SH2 domain. Residues 241–494 (LRLVRKLGSG…FLQSVLEDFY (254 aa)) enclose the Protein kinase domain. ATP contacts are provided by residues 247–255 (LGSGQFGEV) and Lys269. Residue Asp360 is the Proton acceptor of the active site. Residue Tyr389 is modified to Phosphotyrosine; by autocatalysis.

It belongs to the protein kinase superfamily. Tyr protein kinase family. SRC subfamily. Interacts with CBL (via SH2 domain). Interacts with CD79A and CD79B (via SH2 domain). In terms of processing, phosphorylated on tyrosine residues after antibody-mediated surface engagement of the B-cell antigen receptor (BCR). Ubiquitination of activated BLK by the UBE3A ubiquitin protein ligase leads to its degradation by the ubiquitin-proteasome pathway. In terms of tissue distribution, expressed in lymphatic organs, pancreatic islets, Leydig cells, striate ducts of salivary glands and hair follicles.

Its subcellular location is the cell membrane. It catalyses the reaction L-tyrosyl-[protein] + ATP = O-phospho-L-tyrosyl-[protein] + ADP + H(+). With respect to regulation, antibody-mediated surface engagement of the B-cell antigen receptor (BCR) which results in the phosphorylation of BLK on tyrosine residues, stimulates the enzymatic activity. Its function is as follows. Non-receptor tyrosine kinase involved in B-lymphocyte development, differentiation and signaling. B-cell receptor (BCR) signaling requires a tight regulation of several protein tyrosine kinases and phosphatases, and associated coreceptors. Binding of antigen to the B-cell antigen receptor (BCR) triggers signaling that ultimately leads to B-cell activation. Signaling through BLK plays an important role in transmitting signals through surface immunoglobulins and supports the pro-B to pre-B transition, as well as the signaling for growth arrest and apoptosis downstream of B-cell receptor. Specifically binds and phosphorylates CD79A at 'Tyr-188'and 'Tyr-199', as well as CD79B at 'Tyr-196' and 'Tyr-207'. Also phosphorylates the immunoglobulin G receptors FCGR2A, FCGR2B and FCGR2C. With FYN and LYN, plays an essential role in pre-B-cell receptor (pre-BCR)-mediated NF-kappa-B activation. Also contributes to BTK activation by indirectly stimulating BTK intramolecular autophosphorylation. In pancreatic islets, acts as a modulator of beta-cells function through the up-regulation of PDX1 and NKX6-1 and consequent stimulation of insulin secretion in response to glucose. Phosphorylates CGAS, promoting retention of CGAS in the cytosol. The protein is Tyrosine-protein kinase Blk (BLK) of Homo sapiens (Human).